Consider the following 248-residue polypeptide: NADP-dependent 3-hydroxy acid dehydrogenase YdfG (248 aa).

Residues 7-12, 32-33, 54-55, and N81 each bind NADP(+); these read GATAGF, RR, and DV. A substrate-binding site is contributed by S134. NADP(+) is bound by residues Y147, K151, and 177–185; that span reads PGLVGGTEF. Y147 acts as the Proton acceptor in catalysis.

The protein belongs to the short-chain dehydrogenases/reductases (SDR) family. In terms of assembly, homotetramer.

It catalyses the reaction 3-hydroxypropanoate + NADP(+) = 3-oxopropanoate + NADPH + H(+). The catalysed reaction is L-allo-threonine + NADP(+) = aminoacetone + CO2 + NADPH. NADP-dependent dehydrogenase with broad substrate specificity acting on 3-hydroxy acids. Catalyzes the NADP-dependent oxidation of L-allo-threonine to L-2-amino-3-keto-butyrate, which is spontaneously decarboxylated into aminoacetone. Also acts on D-threonine, L-serine, D-serine, D-3-hydroxyisobutyrate, L-3-hydroxyisobutyrate, D-glycerate and L-glycerate. Able to catalyze the reduction of the malonic semialdehyde to 3-hydroxypropionic acid. YdfG is apparently supplementing RutE, the presumed malonic semialdehyde reductase involved in pyrimidine degradation since both are able to detoxify malonic semialdehyde. The polypeptide is NADP-dependent 3-hydroxy acid dehydrogenase YdfG (Escherichia coli (strain K12)).